A 150-amino-acid polypeptide reads, in one-letter code: MEKRKDTKTTLAKASDDQNKAWYVINAEGKTLGRLSSEVAKILRGKHKVTFTPHVAMGDGVIVINAEKVRLTGAKRAQKVYHYYTGFISGMREVPFENMIARKPAYVIEHAVKGMLPKTKLGRRQMKSLRVVKGSSYAQYEAIKPIVLDA.

Belongs to the universal ribosomal protein uL13 family. In terms of assembly, part of the 50S ribosomal subunit.

This protein is one of the early assembly proteins of the 50S ribosomal subunit, although it is not seen to bind rRNA by itself. It is important during the early stages of 50S assembly. This chain is Large ribosomal subunit protein uL13, found in Chlamydia muridarum (strain MoPn / Nigg).